A 559-amino-acid chain; its full sequence is Leucine-rich repeat-containing protein 71 (559 aa).

Residues 1 to 18 (MSSEQSAPGASPRAPRPG) show a composition bias toward low complexity. The interval 1–56 (MSSEQSAPGASPRAPRPGTQKSSGAVTKKGERAAKEKPATVLPPVGEEEPKSPEEY) is disordered. Basic and acidic residues predominate over residues 28-38 (KKGERAAKEKP). 5 LRR repeats span residues 172-193 (NLWK…LPLC), 196-216 (TLRK…HKLM), 221-241 (TIAH…QLLG), 253-266 (TLVS…HIGD), and 281-302 (SLLW…KLAE). Composition is skewed to basic and acidic residues over residues 324–348 (KGTQ…REKS) and 380–391 (KSWELAKKEEKL). Residues 324–427 (KGTQERSRSP…PEQKPSRAKG (104 aa)) form a disordered region.

The protein is Leucine-rich repeat-containing protein 71 (LRRC71) of Homo sapiens (Human).